We begin with the raw amino-acid sequence, 180 residues long: MTLKQLVTGCYTILRSIWMIGMQAFNKRETQMYPDIPIYQTSRFRGRIVLTCDPDGYERCVACNLCAVACPVDCISLQKTESKEGRWYPEFFRINFSRCIFCGLCEEACPTTAIQLTPDFEMAEFKRQDLVYEKEDLLIRGPGKYPEYNFYRMAGIACNDKLKGHAENETRPINVKDLLP.

4Fe-4S ferredoxin-type domains follow at residues 46-80 and 90-119; these read GRIV…LQKT and EFFR…LTPD. Cysteine 60, cysteine 63, cysteine 66, cysteine 70, cysteine 99, cysteine 102, cysteine 105, and cysteine 109 together coordinate [4Fe-4S] cluster.

It belongs to the complex I 23 kDa subunit family. As to quaternary structure, NDH-1 is composed of 14 different subunits. Subunits NuoA, H, J, K, L, M, N constitute the membrane sector of the complex. It depends on [4Fe-4S] cluster as a cofactor.

The protein localises to the cell membrane. It carries out the reaction a quinone + NADH + 5 H(+)(in) = a quinol + NAD(+) + 4 H(+)(out). In terms of biological role, NDH-1 shuttles electrons from NADH, via FMN and iron-sulfur (Fe-S) centers, to quinones in the respiratory chain. The immediate electron acceptor for the enzyme in this species is believed to be ubiquinone. Couples the redox reaction to proton translocation (for every two electrons transferred, four hydrogen ions are translocated across the cytoplasmic membrane), and thus conserves the redox energy in a proton gradient. The sequence is that of NADH-quinone oxidoreductase subunit I from Baumannia cicadellinicola subsp. Homalodisca coagulata.